A 191-amino-acid polypeptide reads, in one-letter code: Pyridoxal 5'-phosphate synthase subunit PdxT (191 aa).

46–48 contributes to the L-glutamine binding site; it reads GES. The active-site Nucleophile is Cys-78. L-glutamine is bound by residues Arg-105 and 133–134; that span reads IR. Residues His-169 and Glu-171 each act as charge relay system in the active site.

Belongs to the glutaminase PdxT/SNO family. In terms of assembly, in the presence of PdxS, forms a dodecamer of heterodimers. Only shows activity in the heterodimer.

It carries out the reaction aldehydo-D-ribose 5-phosphate + D-glyceraldehyde 3-phosphate + L-glutamine = pyridoxal 5'-phosphate + L-glutamate + phosphate + 3 H2O + H(+). It catalyses the reaction L-glutamine + H2O = L-glutamate + NH4(+). It participates in cofactor biosynthesis; pyridoxal 5'-phosphate biosynthesis. In terms of biological role, catalyzes the hydrolysis of glutamine to glutamate and ammonia as part of the biosynthesis of pyridoxal 5'-phosphate. The resulting ammonia molecule is channeled to the active site of PdxS. In Brevibacillus brevis (strain 47 / JCM 6285 / NBRC 100599), this protein is Pyridoxal 5'-phosphate synthase subunit PdxT.